The following is a 154-amino-acid chain: Interleukin-2 (154 aa).

The first 20 residues, 1–20 (MYRMQLLSCIALSLALVTNS), serve as a signal peptide directing secretion. T23 carries O-linked (GalNAc...) threonine glycosylation. Cysteines 78 and 126 form a disulfide.

The protein belongs to the IL-2 family.

The protein localises to the secreted. In terms of biological role, cytokine produced by activated CD4-positive helper T-cells and to a lesser extend activated CD8-positive T-cells and natural killer (NK) cells that plays pivotal roles in the immune response and tolerance. Binds to a receptor complex composed of either the high-affinity trimeric IL-2R (IL2RA/CD25, IL2RB/CD122 and IL2RG/CD132) or the low-affinity dimeric IL-2R (IL2RB and IL2RG). Interaction with the receptor leads to oligomerization and conformation changes in the IL-2R subunits resulting in downstream signaling starting with phosphorylation of JAK1 and JAK3. In turn, JAK1 and JAK3 phosphorylate the receptor to form a docking site leading to the phosphorylation of several substrates including STAT5. This process leads to activation of several pathways including STAT, phosphoinositide-3-kinase/PI3K and mitogen-activated protein kinase/MAPK pathways. Functions as a T-cell growth factor and can increase NK-cell cytolytic activity as well. Promotes strong proliferation of activated B-cells and subsequently immunoglobulin production. Plays a pivotal role in regulating the adaptive immune system by controlling the survival and proliferation of regulatory T-cells, which are required for the maintenance of immune tolerance. Moreover, participates in the differentiation and homeostasis of effector T-cell subsets, including Th1, Th2, Th17 as well as memory CD8-positive T-cells. The polypeptide is Interleukin-2 (IL2) (Papio anubis (Olive baboon)).